The chain runs to 138 residues: Outer membrane protein assembly factor BamE (138 aa).

The signal sequence occupies residues 1-42 (MSHLTMIKTLNLRPFHSASALRKIVITSILGVAVTMSGCSLL).

Belongs to the BamE family. As to quaternary structure, part of the Bam complex.

It is found in the cell outer membrane. Its function is as follows. Part of the outer membrane protein assembly complex, which is involved in assembly and insertion of beta-barrel proteins into the outer membrane. In Psychrobacter arcticus (strain DSM 17307 / VKM B-2377 / 273-4), this protein is Outer membrane protein assembly factor BamE.